Here is a 119-residue protein sequence, read N- to C-terminus: Immunoglobulin lambda variable 4-69 (119 aa).

An N-terminal signal peptide occupies residues 1–20 (MAWTPLLFLTLLLHCTGSLS). Positions 21 to 45 (QLVLTQSPSASASLGASVKLTCTLS) are framework-1. Positions 21–119 (QLVLTQSPSA…YYCQTWGTGI (99 aa)) constitute an Ig-like domain. Cysteine 42 and cysteine 112 are oxidised to a cystine. The segment at 46–52 (SGHSSYA) is complementarity-determining-1. The framework-2 stretch occupies residues 53-69 (IAWHQQQPEKGPRYLMK). A complementarity-determining-2 region spans residues 70-76 (LNSDGSH). The interval 73–92 (DGSHSKGDGIPDRFSGSSSG) is disordered. Residues 77-112 (SKGDGIPDRFSGSSSGAERYLTISSLQSEDEADYYC) form a framework-3 region. Residues 113 to 119 (QTWGTGI) form a complementarity-determining-3 region.

As to quaternary structure, immunoglobulins are composed of two identical heavy chains and two identical light chains; disulfide-linked.

The protein resides in the secreted. Its subcellular location is the cell membrane. V region of the variable domain of immunoglobulin light chains that participates in the antigen recognition. Immunoglobulins, also known as antibodies, are membrane-bound or secreted glycoproteins produced by B lymphocytes. In the recognition phase of humoral immunity, the membrane-bound immunoglobulins serve as receptors which, upon binding of a specific antigen, trigger the clonal expansion and differentiation of B lymphocytes into immunoglobulins-secreting plasma cells. Secreted immunoglobulins mediate the effector phase of humoral immunity, which results in the elimination of bound antigens. The antigen binding site is formed by the variable domain of one heavy chain, together with that of its associated light chain. Thus, each immunoglobulin has two antigen binding sites with remarkable affinity for a particular antigen. The variable domains are assembled by a process called V-(D)-J rearrangement and can then be subjected to somatic hypermutations which, after exposure to antigen and selection, allow affinity maturation for a particular antigen. The chain is Immunoglobulin lambda variable 4-69 from Homo sapiens (Human).